A 591-amino-acid polypeptide reads, in one-letter code: Aspartate--tRNA(Asp/Asn) ligase (591 aa).

An L-aspartate-binding site is contributed by Glu-174. The aspartate stretch occupies residues 198-201; that stretch reads QLFK. An L-aspartate-binding site is contributed by Arg-220. Residues 220–222 and Gln-229 each bind ATP; that span reads RDE. His-450 contacts L-aspartate. Position 483 (Glu-483) interacts with ATP. Arg-490 serves as a coordination point for L-aspartate. Residue 535-538 coordinates ATP; that stretch reads GLDR.

It belongs to the class-II aminoacyl-tRNA synthetase family. Type 1 subfamily. In terms of assembly, homodimer.

It localises to the cytoplasm. The enzyme catalyses tRNA(Asx) + L-aspartate + ATP = L-aspartyl-tRNA(Asx) + AMP + diphosphate. Its function is as follows. Aspartyl-tRNA synthetase with relaxed tRNA specificity since it is able to aspartylate not only its cognate tRNA(Asp) but also tRNA(Asn). Reaction proceeds in two steps: L-aspartate is first activated by ATP to form Asp-AMP and then transferred to the acceptor end of tRNA(Asp/Asn). This is Aspartate--tRNA(Asp/Asn) ligase from Pseudomonas putida (strain ATCC 700007 / DSM 6899 / JCM 31910 / BCRC 17059 / LMG 24140 / F1).